The following is a 456-amino-acid chain: Chitobiosyldiphosphodolichol beta-mannosyltransferase (456 aa).

Residues 1 to 22 are Lumenal-facing; sequence MGEIIKYKGFDHVWQYSGPWLY. Residues 23-43 traverse the membrane as a helical segment; sequence CLIGIYISLPVLAYHILPWIF. At 44-103 the chain is on the cytoplasmic side; that stretch reads HKNRSNKRKTISIFVLGDLGHSPRMCYHASSFSKLDYYVNLCGYVETEPSHQIVDDVNID. Residues 104–124 constitute an intramembrane region (helical); the sequence is IIPIEAIKNTNNLPYIMFAIL. The Cytoplasmic segment spans residues 125 to 456; sequence KVVRQCGKIW…TFSSIFENKS (332 aa).

The protein belongs to the glycosyltransferase group 1 family.

It is found in the endoplasmic reticulum membrane. The enzyme catalyses an N,N'-diacetylchitobiosyl-diphospho-di-trans,poly-cis-dolichol + GDP-alpha-D-mannose = a beta-D-Man-(1-&gt;4)-beta-D-GlcNAc-(1-&gt;4)-alpha-D-GlcNAc-diphospho-di-trans,poly-cis-dolichol + GDP + H(+). The protein operates within protein modification; protein glycosylation. Functionally, participates in the formation of the lipid-linked precursor oligosaccharide for N-glycosylation. Involved in assembling the dolichol-pyrophosphate-GlcNAc(2)-Man(5) intermediate on the cytoplasmic surface of the ER. The protein is Chitobiosyldiphosphodolichol beta-mannosyltransferase (ALG1) of Candida albicans (strain SC5314 / ATCC MYA-2876) (Yeast).